The chain runs to 390 residues: MKRVAILGSTGSIGVQALDVVGRFPDRFEVVGLAAGRNAPRLLEQIRRFRPRVVSVCDEAAARAVRAEAPPGTEVLSGDAGAVAVASHPDAAFVLAAISGGAGLRSTAAAIEAGKPVGLANKESMVLAGELLMARAAAKGVPILPVDSEHSAIHQSLVGHNRGEVRRLILTASGGPLRCTPEAELATVTPERALKHPNWSMGDKITIDSATLMNKGLEVIEARWLFGVEQQRIDIVVHPESVVHSMVEYVDGSIVAQLGISDMRGPISYAMGHPERMPLDLPPLDLGRLGKLTFEPPDPARFPAYTLAYRALELGGTAPAVLSGADEAAVAAFLARRCSFTGIAEVCADVLEAHVVEPVRSVEQALAASEHGRREAEKRVGARAHAPAGR.

Residues T10, G11, S12, I13, G36, R37, N38, and N121 each contribute to the NADPH site. K122 is a 1-deoxy-D-xylulose 5-phosphate binding site. Residue E123 coordinates NADPH. D147 contributes to the Mn(2+) binding site. S148, E149, S173, and H196 together coordinate 1-deoxy-D-xylulose 5-phosphate. E149 serves as a coordination point for Mn(2+). Position 202 (G202) interacts with NADPH. S209, N214, K215, and E218 together coordinate 1-deoxy-D-xylulose 5-phosphate. Residue E218 coordinates Mn(2+). Residues 367–390 are disordered; sequence AASEHGRREAEKRVGARAHAPAGR. A compositionally biased stretch (basic and acidic residues) spans 370–380; that stretch reads EHGRREAEKRV.

It belongs to the DXR family. The cofactor is Mg(2+). Mn(2+) is required as a cofactor.

The enzyme catalyses 2-C-methyl-D-erythritol 4-phosphate + NADP(+) = 1-deoxy-D-xylulose 5-phosphate + NADPH + H(+). It functions in the pathway isoprenoid biosynthesis; isopentenyl diphosphate biosynthesis via DXP pathway; isopentenyl diphosphate from 1-deoxy-D-xylulose 5-phosphate: step 1/6. Catalyzes the NADPH-dependent rearrangement and reduction of 1-deoxy-D-xylulose-5-phosphate (DXP) to 2-C-methyl-D-erythritol 4-phosphate (MEP). The chain is 1-deoxy-D-xylulose 5-phosphate reductoisomerase from Anaeromyxobacter sp. (strain K).